The following is a 518-amino-acid chain: MTSSKIEMPGEVKADPAALMASLHLLPSPTLNLEIKHTKIFINNEWQNSESGRVFPVYNPATGEQICEIQEADKVDTDKAVRAARLAFSLGSVWRRMDASERGQLLDKLADLVERDRAVLATMESLNSGKPFLQAFYVDLQGVIKTLRYYAGWADKIHGMTIPVDGDYFTFTRHEPIGVCGQIIPWNFPLLMFAWKIAPALCCGNTVVIKPAEQTPLSALYMGALIKEAGFPPGVVNILPGFGPIVGAAIASHVGIDKIAFTGSTEVGKLIQEAAGRSNLKRVTLELGGKSPNIIFADADLDYAVEQAHQGVFFNQGQCCTAGSRIYVEESIYEEFVRRSVERAKRRVVGSPFDPTTEQGPQIDKKQYNKILELIQSGITEGAKLECGGKGLGRKGFFIEPTVFSNVTDDMRIAKEEIFGPVQEILRFKTVDEVIERANNSDFGLVAAVFTNDINKALTVSSAMQAGTVWINCYNALNAQSPFGGFKMSGNGREMGESGLREYSEVKTVTIKIPQKNS.

Residues 184 to 186 (IPW), 210 to 213 (KPAE), and 264 to 266 (STE) each bind NAD(+). Residue E286 is the Proton acceptor of the active site. The active-site Nucleophile is C320. NAD(+) contacts are provided by residues 366–370 (KQYNK) and E417.

The protein belongs to the aldehyde dehydrogenase family. As to quaternary structure, homotetramer.

The protein localises to the cytoplasm. The enzyme catalyses retinal + NAD(+) + H2O = retinoate + NADH + 2 H(+). It carries out the reaction all-trans-retinal + NAD(+) + H2O = all-trans-retinoate + NADH + 2 H(+). It catalyses the reaction all-trans-13,14-dihydroretinal + NAD(+) + H2O = all-trans-13,14-dihydroretinoate + NADH + 2 H(+). It participates in cofactor metabolism; retinol metabolism. Its function is as follows. Catalyzes the NAD-dependent oxidation of aldehyde substrates, such as all-trans-retinal and all-trans-13,14-dihydroretinal, to their corresponding carboxylic acids, all-trans-retinoate and all-trans-13,14-dihydroretinoate, respectively. Retinoate signaling is critical for the transcriptional control of many genes, for instance it is crucial for initiation of meiosis in both male and female. Recognizes retinal as substrate, both in its free form and when bound to cellular retinol-binding protein. Lacks activity with benzaldehyde, acetaldehyde and octanal. Displays complete lack of activity with citral. The sequence is that of Retinal dehydrogenase 2 (ALDH1A2) from Gallus gallus (Chicken).